Reading from the N-terminus, the 414-residue chain is Serine hydroxymethyltransferase (414 aa).

(6S)-5,6,7,8-tetrahydrofolate is bound by residues L121 and 125–127 (GHL). Residue K229 is modified to N6-(pyridoxal phosphate)lysine.

Belongs to the SHMT family. Homodimer. Pyridoxal 5'-phosphate serves as cofactor.

It localises to the cytoplasm. It catalyses the reaction (6R)-5,10-methylene-5,6,7,8-tetrahydrofolate + glycine + H2O = (6S)-5,6,7,8-tetrahydrofolate + L-serine. The protein operates within one-carbon metabolism; tetrahydrofolate interconversion. Its pathway is amino-acid biosynthesis; glycine biosynthesis; glycine from L-serine: step 1/1. Functionally, catalyzes the reversible interconversion of serine and glycine with tetrahydrofolate (THF) serving as the one-carbon carrier. This reaction serves as the major source of one-carbon groups required for the biosynthesis of purines, thymidylate, methionine, and other important biomolecules. Also exhibits THF-independent aldolase activity toward beta-hydroxyamino acids, producing glycine and aldehydes, via a retro-aldol mechanism. This is Serine hydroxymethyltransferase from Verminephrobacter eiseniae (strain EF01-2).